Consider the following 76-residue polypeptide: MSYQEQQCKQPCQPPPVCPPPKCPEPCSPSVCPEPCPPPKCPEPCPEPCPPPSFQQKCPPVQPPPPCQQKCPPKSK.

3 consecutive repeat copies span residues 21–29 (PKCPEPCSP), 30–38 (SVCPEPCPP), and 39–47 (PKCPEPCPE). A 3 X 9 AA approximate tandem repeats region spans residues 21-47 (PKCPEPCSPSVCPEPCPPPKCPEPCPE). Residues 53–76 (SFQQKCPPVQPPPPCQQKCPPKSK) are disordered.

Belongs to the cornifin (SPRR) family. Expressed in uterus.

It localises to the cytoplasm. Its function is as follows. Cross-linked envelope protein of keratinocytes. It is a keratinocyte protein that first appears in the cell cytosol, but ultimately becomes cross-linked to membrane proteins by transglutaminase. All that results in the formation of an insoluble envelope beneath the plasma membrane. This chain is Small proline-rich protein 2F (Sprr2f), found in Mus musculus (Mouse).